The primary structure comprises 119 residues: Ribonuclease P protein component (119 aa).

Belongs to the RnpA family. In terms of assembly, consists of a catalytic RNA component (M1 or rnpB) and a protein subunit.

It catalyses the reaction Endonucleolytic cleavage of RNA, removing 5'-extranucleotides from tRNA precursor.. In terms of biological role, RNaseP catalyzes the removal of the 5'-leader sequence from pre-tRNA to produce the mature 5'-terminus. It can also cleave other RNA substrates such as 4.5S RNA. The protein component plays an auxiliary but essential role in vivo by binding to the 5'-leader sequence and broadening the substrate specificity of the ribozyme. The protein is Ribonuclease P protein component of Beutenbergia cavernae (strain ATCC BAA-8 / DSM 12333 / CCUG 43141 / JCM 11478 / NBRC 16432 / NCIMB 13614 / HKI 0122).